The primary structure comprises 561 residues: Zinc finger protein with KRAB and SCAN domains 1 (561 aa).

Positions 1–51 are disordered; that stretch reads MMTAESRETTGLSPQAAQEKDGIVIVKVEEEDEEDHMWGQDSSLQETPPPD. Ser-13 is subject to Phosphoserine. Lys-27 participates in a covalent cross-link: Glycyl lysine isopeptide (Lys-Gly) (interchain with G-Cter in SUMO2). The SCAN box domain maps to 56 to 138; sequence RQRFRRFCYQ…TLLEDLELDL (83 aa). A disordered region spans residues 163–187; the sequence is VQESSSFDHHETAQSHFKHSSRKPR. Residues 178–187 are compositionally biased toward basic residues; that stretch reads HFKHSSRKPR. Glycyl lysine isopeptide (Lys-Gly) (interchain with G-Cter in SUMO2) cross-links involve residues Lys-180 and Lys-226. The region spanning 225 to 304 is the KRAB domain; that stretch reads VKIEDMAVSL…QKEFGEKREQ (80 aa). Over residues 260–275 the composition is skewed to polar residues; sequence NVFSQGSENRNGNEST. The interval 260–372 is disordered; the sequence is NVFSQGSENR…NTPEEAPSGA (113 aa). 2 stretches are compositionally biased toward basic and acidic residues: residues 276 to 286 and 294 to 349; these read SKAEVKEDSTS and FQKE…EKGK. Residues Lys-277, Lys-296, Lys-301, and Lys-336 each participate in a glycyl lysine isopeptide (Lys-Gly) (interchain with G-Cter in SUMO2) cross-link. The span at 355 to 365 shows a compositional bias: polar residues; the sequence is FSLSANFNNTP. A Glycyl lysine isopeptide (Lys-Gly) (interchain with G-Cter in SUMO2) cross-link involves residue Lys-373. 6 C2H2-type zinc fingers span residues 375 to 397, 403 to 425, 431 to 453, 459 to 481, 487 to 509, and 515 to 537; these read HRCD…KIIH, YECN…QRIH, HECN…QRIH, YECS…RRIH, and YKCT…HRIH. Residues Lys-410, Lys-438, and Lys-476 each participate in a glycyl lysine isopeptide (Lys-Gly) (interchain with G-Cter in SUMO2) cross-link. A Glycyl lysine isopeptide (Lys-Gly) (interchain with G-Cter in SUMO2) cross-link involves residue Lys-558.

Belongs to the krueppel C2H2-type zinc-finger protein family.

Its subcellular location is the nucleus. Functionally, may be involved in transcriptional regulation. This chain is Zinc finger protein with KRAB and SCAN domains 1 (Zkscan1), found in Mus musculus (Mouse).